The following is a 338-amino-acid chain: Dihydroorotate dehydrogenase (quinone) (338 aa).

Residues 68–72 (AGMDK) and Thr92 contribute to the FMN site. Lys72 is a substrate binding site. 117–121 (NRMGF) contacts substrate. FMN-binding residues include Ser147 and Asn180. Residue Asn180 participates in substrate binding. Ser183 serves as the catalytic Nucleophile. Asn185 contacts substrate. Residues Lys214 and Thr242 each coordinate FMN. Residue 243–244 (NT) participates in substrate binding. Residues Gly267, Gly296, and 317–318 (YT) each bind FMN.

It belongs to the dihydroorotate dehydrogenase family. Type 2 subfamily. In terms of assembly, monomer. Requires FMN as cofactor.

It is found in the cell membrane. It carries out the reaction (S)-dihydroorotate + a quinone = orotate + a quinol. The protein operates within pyrimidine metabolism; UMP biosynthesis via de novo pathway; orotate from (S)-dihydroorotate (quinone route): step 1/1. Catalyzes the conversion of dihydroorotate to orotate with quinone as electron acceptor. The sequence is that of Dihydroorotate dehydrogenase (quinone) from Salinispora arenicola (strain CNS-205).